Here is a 346-residue protein sequence, read N- to C-terminus: MSPYISPLFSITMIMSVMLISSSGHWVFMWLGLELGTLAFIPILVWWHSSLEVEATVKYFIVQAMAAAVFFLGGMVSLSGDFMGGVNQLMGNIGDMMIMLAVVTKLGLAPFHYWVVDVVQGLNYIPGAVLLTWQKVPGLAVLTQLATCNNSSMLLLFGMVSALVGGLGGLGQTQMRKLLAFSSISHLGWLVVGCVAGSLLGLSYFTLYVVLSIPLFSILHMLNGGHLNQLRTGLMFNPLMSVLLGVGFLSLGGLPPFFGFFGKWLLLTHFVGQLLLGVSVVLITGTLISLFYYLRVSYLCIVVLGPQQIMSGLNWRKMQLSGLMSGLLVLNMLGLFLVGGASCLPK.

Transmembrane regions (helical) follow at residues 1–21 (MSPY…MLIS), 26–46 (WVFM…ILVW), 60–80 (FIVQ…SLSG), 96–116 (MMIM…YWVV), 122–142 (LNYI…LAVL), 151–171 (SSML…GGLG), 178–198 (LLAF…VAGS), 199–219 (LLGL…FSIL), 242–262 (VLLG…GFFG), 274–294 (LLLG…FYYL), and 320–340 (LSGL…LVGG).

Belongs to the complex I subunit 2 family.

The protein resides in the mitochondrion inner membrane. It carries out the reaction a ubiquinone + NADH + 5 H(+)(in) = a ubiquinol + NAD(+) + 4 H(+)(out). Functionally, core subunit of the mitochondrial membrane respiratory chain NADH dehydrogenase (Complex I) that is believed to belong to the minimal assembly required for catalysis. Complex I functions in the transfer of electrons from NADH to the respiratory chain. The immediate electron acceptor for the enzyme is believed to be ubiquinone. The protein is NADH-ubiquinone oxidoreductase chain 2 (ND2) of Branchiostoma floridae (Florida lancelet).